Consider the following 158-residue polypeptide: Urease accessory protein UreE (158 aa).

It belongs to the UreE family.

It localises to the cytoplasm. Its function is as follows. Involved in urease metallocenter assembly. Binds nickel. Probably functions as a nickel donor during metallocenter assembly. The chain is Urease accessory protein UreE from Corynebacterium urealyticum (strain ATCC 43042 / DSM 7109).